The chain runs to 441 residues: Protein cortex (441 aa).

WD repeat units follow at residues 110–148 (SITSFPDVLDWSHDDILVAALGKKYHKWSWRTQSPVDQG), 149–187 (QTMFDIRCCKFDPKGKRLLLGTDMRVEVHNELSKCQFVQ), 193–233 (IQIC…KSLV), 235–276 (IEGA…RFMK), 277–320 (TNEI…KLRQ), 345–379 (SLWSLDVNVPYPKSSELVVMSNFDTVVDHWGESHT), and 380–420 (GLNR…KILA). The D-box motif lies at 379 to 390 (TGLNRIRTMVFS).

Belongs to the WD repeat CORT family.

It localises to the cytoplasm. Controls wing pigmentation patterning, possibly by regulating scale cell development. Probably acts as an activator of the anaphase promoting complex/cyclosome (APC/C) that promotes the ubiquitin ligase activity and substrate specificity of the APC/C. This is Protein cortex from Biston betularia (Pepper-and-salt geometer moth).